The following is a 678-amino-acid chain: MMGCGFHFPWFFFLIIGLQAPLSLSLTSQGSALLKFRARVNSDPHGTLANWNVSGINDLCYWSGVTCVDGKVQILDLSGYSLEGTLAPELSQLSDLRSLILSRNHFSGGIPKEYGSFENLEVLDLRENDLSGQIPPELSNGLSLKHLLLSGNKFSDDMRIKIVRLQSSYEVRLKKSPKLSPLAVLGCINRKLGHCVSRNRIIQVKKVEAIVFRIKATSRRFLKAFPSFLEETDIYKRRELLEETSNLAAEPAPSAPSPSPGIITEASPRSSGSFPAVTNAKKRRPPLVPPVPSPDKGSTSPDISKNQPQDNKQSKGSKHVWLYVVIAVASFVGLLIIVAVIFFCRKRAVKSIGPWKTGLSGQLQKAFVTGVPKLNRSELETACEDFSNIIETFDGYTVYKGTLSSGVEIAVASTAIAESKEWTRAMEMAYRRKIDTLSRINHKNFVNLIGYCEEDDPFNRMMVFEYAPNGTLFEHLHDKETEHLDWSARMRIIMGTAYCLQHMHGMNPPMAHTDFNSSEIYLTDDYAAKVSEIPFNLEARLNPKKHVSGDLEQTSLLLPPEPEANVHSFGVLMLEIISGKLSFSDEYGSIEQWASKYLEKDDLGEMIDPSLKTFKEEELEVICDVIRECLKTEQRQRPSMKDVAEQLKQVINITPEKATPRSSPLWWAELEILSSEAT.

A signal peptide spans 1–25 (MMGCGFHFPWFFFLIIGLQAPLSLS). Topologically, residues 26–323 (LTSQGSALLK…SKGSKHVWLY (298 aa)) are extracellular. Asparagine 52 carries N-linked (GlcNAc...) asparagine glycosylation. 4 LRR repeats span residues 71 to 94 (KVQI…SQLS), 95 to 117 (DLRS…YGSF), 119 to 141 (NLEV…LSNG), and 143 to 164 (SLKH…KIVR). A disordered region spans residues 247 to 314 (LAAEPAPSAP…KNQPQDNKQS (68 aa)). Positions 296 to 311 (KGSTSPDISKNQPQDN) are enriched in polar residues. A helical membrane pass occupies residues 324-344 (VVIAVASFVGLLIIVAVIFFC). Residues 345-678 (RKRAVKSIGP…ELEILSSEAT (334 aa)) are Cytoplasmic-facing. The Protein kinase domain maps to 346–651 (KRAVKSIGPW…DVAEQLKQVI (306 aa)).

It belongs to the protein kinase superfamily. Ser/Thr protein kinase family. In terms of tissue distribution, expressed in pollen tubes and seedlings.

The protein localises to the endomembrane system. The enzyme catalyses L-seryl-[protein] + ATP = O-phospho-L-seryl-[protein] + ADP + H(+). It carries out the reaction L-threonyl-[protein] + ATP = O-phospho-L-threonyl-[protein] + ADP + H(+). Involved in the pollen tube perception of the female signal by binding an unidentified female attractant. May be involved in the regulation of root hairs development. This chain is Protein MALE DISCOVERER 2 (MDIS2), found in Arabidopsis thaliana (Mouse-ear cress).